The primary structure comprises 251 residues: MRRPMVAGNWKMHGTRASVAELIEGLCKQSLPGSVDIAVMPASLFTCQVVDGLKATSIIVGAQDAAIQAEQGALTGEVASSQLADAGCKLVLVGHSERRQLIGEQDDVLNKKFAAIQAKGLTPVLCVGETLEERKAGQTLEVVGRQLDSVIAEFGVNALVNAVIAYEPVWAIGTGLTASPQEAQEVHAAIRAQLAKENAEVAQGVRLLYGGSVKAANAVELFSMPDIDGGLIGGASLNADEFGAICRAAGN.

9 to 11 (NWK) is a binding site for substrate. Catalysis depends on H95, which acts as the Electrophile. The active-site Proton acceptor is E167. Substrate is bound by residues G173, S212, and 233–234 (GG).

The protein belongs to the triosephosphate isomerase family. As to quaternary structure, homodimer.

It is found in the cytoplasm. The catalysed reaction is D-glyceraldehyde 3-phosphate = dihydroxyacetone phosphate. It participates in carbohydrate biosynthesis; gluconeogenesis. It functions in the pathway carbohydrate degradation; glycolysis; D-glyceraldehyde 3-phosphate from glycerone phosphate: step 1/1. In terms of biological role, involved in the gluconeogenesis. Catalyzes stereospecifically the conversion of dihydroxyacetone phosphate (DHAP) to D-glyceraldehyde-3-phosphate (G3P). The chain is Triosephosphate isomerase from Pseudomonas syringae pv. syringae (strain B728a).